The sequence spans 617 residues: RNA polymerase sigma factor RpoD (617 aa).

Residues 170–220 (PDDGSLPAEEVEPVNLKDDSADSKEKDDEEEESDDSSDSDDEGDGGPDPEE) form a disordered region. Over residues 184 to 195 (NLKDDSADSKEK) the composition is skewed to basic and acidic residues. Positions 196-218 (DDEEEESDDSSDSDDEGDGGPDP) are enriched in acidic residues. Residues 383–453 (MVEANLRLVI…TRSIADQART (71 aa)) form a sigma-70 factor domain-2 region. An Interaction with polymerase core subunit RpoC motif is present at residues 407 to 410 (DLIQ). Residues 462 to 538 (ETINKLNRIS…DSTMQSPIEM (77 aa)) are sigma-70 factor domain-3. Residues 551–604 (VLAGLTAREAKVLRMRFGIDMNTDHTLEEVGKQFDVTRERIRQIEAKALRKLRH) are sigma-70 factor domain-4. Positions 577–596 (LEEVGKQFDVTRERIRQIEA) form a DNA-binding region, H-T-H motif.

It belongs to the sigma-70 factor family. RpoD/SigA subfamily. Interacts transiently with the RNA polymerase catalytic core.

The protein localises to the cytoplasm. Functionally, sigma factors are initiation factors that promote the attachment of RNA polymerase to specific initiation sites and are then released. This sigma factor is the primary sigma factor during exponential growth. This is RNA polymerase sigma factor RpoD from Pseudomonas aeruginosa (strain ATCC 15692 / DSM 22644 / CIP 104116 / JCM 14847 / LMG 12228 / 1C / PRS 101 / PAO1).